Reading from the N-terminus, the 37-residue chain is Large ribosomal subunit protein bL36 (37 aa).

Belongs to the bacterial ribosomal protein bL36 family.

The chain is Large ribosomal subunit protein bL36 from Cyanothece sp. (strain PCC 7425 / ATCC 29141).